The sequence spans 521 residues: NAD(P)H-quinone oxidoreductase subunit 2 (521 aa).

The next 14 membrane-spanning stretches (helical) occupy residues 16 to 36, 43 to 63, 80 to 100, 110 to 130, 133 to 153, 168 to 188, 211 to 231, 245 to 265, 279 to 299, 307 to 327, 335 to 355, 379 to 399, 401 to 421, and 467 to 487; these read ILPEGIVIITLMVVLIGDLIG, WLPYGAIAGLLAALFALYTAW, LSIVFRGIIALSTIVTLLMSI, LAEFIGIMLTATLGGMFLSGA, LVMIFISLEMLSISSYLMTGY, LLIGASSSAIFLYGSSLLYGL, LGLAIALVFVIAGIAFKISAV, PTPVVAFLSVGSKAAGFALAI, WHLIFTALAILSMVLGNVVAL, MLAYSSIGQAGFVMIGLTAGT, VFYLLVYLFMNLGAFSGVILF, LGLSLCLLSLGGIPPLAGFFG, IYLFWAGWQAELYGLVLLALV, and VGLVLSVIATSLAGILSNPLF.

It belongs to the complex I subunit 2 family. In terms of assembly, NDH-1 can be composed of about 15 different subunits; different subcomplexes with different compositions have been identified which probably have different functions.

The protein resides in the cellular thylakoid membrane. It catalyses the reaction a plastoquinone + NADH + (n+1) H(+)(in) = a plastoquinol + NAD(+) + n H(+)(out). It carries out the reaction a plastoquinone + NADPH + (n+1) H(+)(in) = a plastoquinol + NADP(+) + n H(+)(out). In terms of biological role, NDH-1 shuttles electrons from an unknown electron donor, via FMN and iron-sulfur (Fe-S) centers, to quinones in the respiratory and/or the photosynthetic chain. The immediate electron acceptor for the enzyme in this species is believed to be plastoquinone. Couples the redox reaction to proton translocation, and thus conserves the redox energy in a proton gradient. Cyanobacterial NDH-1 also plays a role in inorganic carbon-concentration. The polypeptide is NAD(P)H-quinone oxidoreductase subunit 2 (Crocosphaera subtropica (strain ATCC 51142 / BH68) (Cyanothece sp. (strain ATCC 51142))).